A 674-amino-acid chain; its full sequence is DNA ligase (674 aa).

NAD(+) is bound by residues 35–39, 84–85, and Glu118; these read DFEFD and SL. The active-site N6-AMP-lysine intermediate is the Lys120. The NAD(+) site is built by Arg141, Glu184, Lys297, and Lys321. Positions 415, 418, 433, and 439 each coordinate Zn(2+). The region spanning 598–674 is the BRCT domain; that stretch reads QVNRNFEGVT…VSEDEFEAML (77 aa).

This sequence belongs to the NAD-dependent DNA ligase family. LigA subfamily. Requires Mg(2+) as cofactor. Mn(2+) serves as cofactor.

The catalysed reaction is NAD(+) + (deoxyribonucleotide)n-3'-hydroxyl + 5'-phospho-(deoxyribonucleotide)m = (deoxyribonucleotide)n+m + AMP + beta-nicotinamide D-nucleotide.. In terms of biological role, DNA ligase that catalyzes the formation of phosphodiester linkages between 5'-phosphoryl and 3'-hydroxyl groups in double-stranded DNA using NAD as a coenzyme and as the energy source for the reaction. It is essential for DNA replication and repair of damaged DNA. The polypeptide is DNA ligase (Pelodictyon phaeoclathratiforme (strain DSM 5477 / BU-1)).